Consider the following 205-residue polypeptide: Protein DEPP1 (205 aa).

Composition is skewed to polar residues over residues 55 to 64 (DKVTAQSRPN) and 83 to 101 (GDSS…SPGT). The disordered stretch occupies residues 55–171 (DKVTAQSRPN…RHQTSDLKSW (117 aa)). Residues 138–155 (MGKDTGRLCEARVPEHSL) are compositionally biased toward basic and acidic residues.

The protein localises to the cytoplasm. The protein resides in the peroxisome. It localises to the mitochondrion. In terms of biological role, acts as a critical modulator of FOXO3-induced autophagy via increased cellular ROS. In Mus musculus (Mouse), this protein is Protein DEPP1 (Depp1).